A 95-amino-acid chain; its full sequence is Aspartyl/glutamyl-tRNA(Asn/Gln) amidotransferase subunit C (95 aa).

The protein belongs to the GatC family. As to quaternary structure, heterotrimer of A, B and C subunits.

The enzyme catalyses L-glutamyl-tRNA(Gln) + L-glutamine + ATP + H2O = L-glutaminyl-tRNA(Gln) + L-glutamate + ADP + phosphate + H(+). It carries out the reaction L-aspartyl-tRNA(Asn) + L-glutamine + ATP + H2O = L-asparaginyl-tRNA(Asn) + L-glutamate + ADP + phosphate + 2 H(+). In terms of biological role, allows the formation of correctly charged Asn-tRNA(Asn) or Gln-tRNA(Gln) through the transamidation of misacylated Asp-tRNA(Asn) or Glu-tRNA(Gln) in organisms which lack either or both of asparaginyl-tRNA or glutaminyl-tRNA synthetases. The reaction takes place in the presence of glutamine and ATP through an activated phospho-Asp-tRNA(Asn) or phospho-Glu-tRNA(Gln). This chain is Aspartyl/glutamyl-tRNA(Asn/Gln) amidotransferase subunit C, found in Brucella anthropi (strain ATCC 49188 / DSM 6882 / CCUG 24695 / JCM 21032 / LMG 3331 / NBRC 15819 / NCTC 12168 / Alc 37) (Ochrobactrum anthropi).